We begin with the raw amino-acid sequence, 503 residues long: ATP synthase subunit alpha, chloroplastic (503 aa).

170–177 contacts ATP; the sequence is GDRQTGKT.

Belongs to the ATPase alpha/beta chains family. As to quaternary structure, F-type ATPases have 2 components, CF(1) - the catalytic core - and CF(0) - the membrane proton channel. CF(1) has five subunits: alpha(3), beta(3), gamma(1), delta(1), epsilon(1). CF(0) has four main subunits: a, b, b' and c.

It is found in the plastid. It localises to the chloroplast thylakoid membrane. The enzyme catalyses ATP + H2O + 4 H(+)(in) = ADP + phosphate + 5 H(+)(out). Produces ATP from ADP in the presence of a proton gradient across the membrane. The alpha chain is a regulatory subunit. In Gracilaria tenuistipitata var. liui (Red alga), this protein is ATP synthase subunit alpha, chloroplastic.